A 573-amino-acid polypeptide reads, in one-letter code: Urease subunit alpha 2 (573 aa).

Residues 135–573 (GGMDTHVHYI…ISLNQLYFFS (439 aa)) enclose the Urease domain. The Ni(2+) site is built by histidine 140, histidine 142, and lysine 223. At lysine 223 the chain carries N6-carboxylysine. Histidine 225 provides a ligand contact to substrate. Ni(2+) contacts are provided by histidine 252 and histidine 278. Catalysis depends on histidine 326, which acts as the Proton donor. Aspartate 366 lines the Ni(2+) pocket.

Belongs to the metallo-dependent hydrolases superfamily. Urease alpha subunit family. As to quaternary structure, heterotrimer of UreA (gamma), UreB (beta) and UreC (alpha) subunits. Three heterotrimers associate to form the active enzyme. Ni cation serves as cofactor. In terms of processing, carboxylation allows a single lysine to coordinate two nickel ions.

It localises to the cytoplasm. The enzyme catalyses urea + 2 H2O + H(+) = hydrogencarbonate + 2 NH4(+). Its pathway is nitrogen metabolism; urea degradation; CO(2) and NH(3) from urea (urease route): step 1/1. The chain is Urease subunit alpha 2 from Brucella melitensis biotype 1 (strain ATCC 23456 / CCUG 17765 / NCTC 10094 / 16M).